A 250-amino-acid polypeptide reads, in one-letter code: Imidazole glycerol phosphate synthase subunit HisF (250 aa).

Catalysis depends on residues Asp-11 and Asp-130.

This sequence belongs to the HisA/HisF family. Heterodimer of HisH and HisF.

The protein localises to the cytoplasm. It catalyses the reaction 5-[(5-phospho-1-deoxy-D-ribulos-1-ylimino)methylamino]-1-(5-phospho-beta-D-ribosyl)imidazole-4-carboxamide + L-glutamine = D-erythro-1-(imidazol-4-yl)glycerol 3-phosphate + 5-amino-1-(5-phospho-beta-D-ribosyl)imidazole-4-carboxamide + L-glutamate + H(+). It participates in amino-acid biosynthesis; L-histidine biosynthesis; L-histidine from 5-phospho-alpha-D-ribose 1-diphosphate: step 5/9. IGPS catalyzes the conversion of PRFAR and glutamine to IGP, AICAR and glutamate. The HisF subunit catalyzes the cyclization activity that produces IGP and AICAR from PRFAR using the ammonia provided by the HisH subunit. In Bacteroides fragilis (strain ATCC 25285 / DSM 2151 / CCUG 4856 / JCM 11019 / LMG 10263 / NCTC 9343 / Onslow / VPI 2553 / EN-2), this protein is Imidazole glycerol phosphate synthase subunit HisF.